A 99-amino-acid polypeptide reads, in one-letter code: DNA-binding protein HU (99 aa).

Residues 63 to 82 (HRKEREGRNPKTGAKMKIDA) are disordered.

It belongs to the bacterial histone-like protein family. As to quaternary structure, homodimer.

Functionally, histone-like DNA-binding protein which is capable of wrapping DNA to stabilize it, and thus to prevent its denaturation under extreme environmental conditions. The protein is DNA-binding protein HU (hup) of Rickettsia prowazekii (strain Madrid E).